The chain runs to 60 residues: Defensin-like protein 4 (60 aa).

4 cysteine pairs are disulfide-bonded: cysteine 4–cysteine 56, cysteine 17–cysteine 41, cysteine 26–cysteine 51, and cysteine 30–cysteine 53.

This sequence belongs to the DEFL family. Protease inhibitor I18 (RTI/MTI-2) subfamily.

The protein resides in the secreted. Inhibits trypsin and chymotrypsin. This Brassica napus (Rape) protein is Defensin-like protein 4.